Consider the following 307-residue polypeptide: MTVTAAMVKDLREKTGAGMMDCKKALAETNGDMEAAIDWLRAKGIAKADKKSGRTAAEGLIGIASAGNKAVVVEINSETDFVARNDAFQDLVRGIANVALGTDGTVEAVSQATYPATGKSVEDSVKDAIATIGENMTLRRAAALKVEDGVVATYIHNAAGDGIGKLGVLVALKSTGNKEALNAIGRQVAMHVAATNPLAVRPSEIDPAVAERERNVFIEQSRASGKPDNIIEKMVDGRMRKFFEEVALLSQAFVMNPDQTVEAAIKEAEKTVGAPIEVAGIARLLLGEGVQKEESDFAAEVAAAAKG.

Residues 79-82 are involved in Mg(2+) ion dislocation from EF-Tu; the sequence is TDFV.

This sequence belongs to the EF-Ts family.

The protein resides in the cytoplasm. Functionally, associates with the EF-Tu.GDP complex and induces the exchange of GDP to GTP. It remains bound to the aminoacyl-tRNA.EF-Tu.GTP complex up to the GTP hydrolysis stage on the ribosome. This is Elongation factor Ts from Sinorhizobium fredii (strain NBRC 101917 / NGR234).